The chain runs to 68 residues: Peptide TsPep3 (68 aa).

Residues 1-26 (MKLSCGFLLIFLVLSAMIATFSEVEA) form the signal peptide. Intrachain disulfides connect Cys-30/Cys-38, Cys-33/Cys-54, Cys-37/Cys-47, and Cys-42/Cys-52. Positions 56-68 (GRSDLNEEFENYQ) are excised as a propeptide.

In terms of tissue distribution, expressed by the venom gland.

The protein localises to the secreted. In terms of biological role, probable weak potassium channel blocker. The chain is Peptide TsPep3 from Tityus serrulatus (Brazilian scorpion).